We begin with the raw amino-acid sequence, 701 residues long: Elongation factor G (701 aa).

In terms of domain architecture, tr-type G spans 10-286; that stretch reads NKVRNIGIMA…AVIDYLPSPL (277 aa). GTP-binding positions include 19-26, 83-87, and 137-140; these read AHIDAGKT, DTPGH, and NKMD.

This sequence belongs to the TRAFAC class translation factor GTPase superfamily. Classic translation factor GTPase family. EF-G/EF-2 subfamily.

Its subcellular location is the cytoplasm. Functionally, catalyzes the GTP-dependent ribosomal translocation step during translation elongation. During this step, the ribosome changes from the pre-translocational (PRE) to the post-translocational (POST) state as the newly formed A-site-bound peptidyl-tRNA and P-site-bound deacylated tRNA move to the P and E sites, respectively. Catalyzes the coordinated movement of the two tRNA molecules, the mRNA and conformational changes in the ribosome. This Mycobacteroides abscessus (strain ATCC 19977 / DSM 44196 / CCUG 20993 / CIP 104536 / JCM 13569 / NCTC 13031 / TMC 1543 / L948) (Mycobacterium abscessus) protein is Elongation factor G.